The following is a 949-amino-acid chain: Nonsense-mediated mRNA decay factor SMG8 (949 aa).

Disordered stretches follow at residues 564-607, 624-652, and 748-768; these read SGAR…LSPT, NESQ…DTEN, and PKQQ…QQRW. The segment covering 571–581 has biased composition (acidic residues); sequence EGDDEPEDEVV. The span at 594–607 shows a compositional bias: polar residues; that stretch reads NTASNGCSQPLSPT. Positions 624-648 are enriched in low complexity; sequence NESQASSEQLSNSEQNTSSSGTSSA. The span at 749-768 shows a compositional bias: basic residues; the sequence is KQQHHTHHQQQHPGKKQQRW.

It belongs to the SMG8 family.

In terms of biological role, involved in nonsense-mediated decay (NMD) of mRNAs containing premature stop codons. Probable component of kinase complex containing nonC and recruited to stalled ribosomes. This is Nonsense-mediated mRNA decay factor SMG8 from Drosophila erecta (Fruit fly).